Consider the following 510-residue polypeptide: MAVGNGVLLHIARSLMLFFHVQKLVQYLWMNSRRHRLPPGPIGWPVLGALPLLGTMPHVALANMAKKYGPVMYLKVGSCGLAVASTPEAAKAFLKTLDMNFSNRPPNAGATHLAYNAQDMVFADYGPRWKLLRKLSNIHILGGKALQGWEEVRKKELGYMLYAMAESGRHGQPVVVSEMLTYAMANMLGQVMLSKRVFGSQGSESNEFKDMVVELMTVAGYFNIGDFIPSIAWMDLQGIQGGMKRLHKKFDALLTRLLEEHTASAHERKGSPDFLDFVVANRDNSEGERLHTVNIKALLLNMFTAGTDTSSSVIEWALAELLKNPIILKRAQEEMDGVIGRDRRFLEADISKLPYLQAICKEAFRKHPSTPLNLPRIASQACEVNGHYIPKGTRLSVNIWAIGRDPSLWENPNEFNPDRFLERKNAKIDPRGNDFELIPFGAGRRICAGTRLGILLVEYILGTLVHSFDWELPSSVIELNMDEPFGLALQKAVPLAAMVTPRLPLHIYCP.

Cys447 serves as a coordination point for heme.

This sequence belongs to the cytochrome P450 family. It depends on heme as a cofactor.

It carries out the reaction a 3',5'-unsubstituted flavanone + 2 reduced [NADPH--hemoprotein reductase] + 2 O2 = a 3',5'-dihydroxyflavanone + 2 oxidized [NADPH--hemoprotein reductase] + 2 H2O + 2 H(+). It participates in pigment biosynthesis; anthocyanin biosynthesis. Its function is as follows. Catalyzes the 3'5'-hydroxylation of naringenin and eriodictyol to form 5,7,3,'4',5'-pentahydroxyflavanone and 3',5'-hydroxylation of dihydrokaempferol and dihydroquercetin to form dihydromyricetin. This is Flavonoid 3',5'-hydroxylase (CYP75A5) from Eustoma exaltatum subsp. russellianum (Bluebells).